The primary structure comprises 529 residues: Peptide chain release factor 3 (529 aa).

One can recognise a tr-type G domain in the interval 10 to 278 (ARRRTFAIIS…NFVDLAPAPR (269 aa)). GTP is bound by residues 19–26 (SHPDAGKT), 87–91 (DTPGH), and 141–144 (NKLD).

It belongs to the TRAFAC class translation factor GTPase superfamily. Classic translation factor GTPase family. PrfC subfamily.

The protein resides in the cytoplasm. In terms of biological role, increases the formation of ribosomal termination complexes and stimulates activities of RF-1 and RF-2. It binds guanine nucleotides and has strong preference for UGA stop codons. It may interact directly with the ribosome. The stimulation of RF-1 and RF-2 is significantly reduced by GTP and GDP, but not by GMP. In Nitratidesulfovibrio vulgaris (strain ATCC 29579 / DSM 644 / CCUG 34227 / NCIMB 8303 / VKM B-1760 / Hildenborough) (Desulfovibrio vulgaris), this protein is Peptide chain release factor 3.